The following is a 472-amino-acid chain: 3-isopropylmalate dehydratase large subunit (472 aa).

Residues cysteine 353, cysteine 414, and cysteine 417 each coordinate [4Fe-4S] cluster.

It belongs to the aconitase/IPM isomerase family. LeuC type 1 subfamily. As to quaternary structure, heterodimer of LeuC and LeuD. It depends on [4Fe-4S] cluster as a cofactor.

It catalyses the reaction (2R,3S)-3-isopropylmalate = (2S)-2-isopropylmalate. The protein operates within amino-acid biosynthesis; L-leucine biosynthesis; L-leucine from 3-methyl-2-oxobutanoate: step 2/4. Functionally, catalyzes the isomerization between 2-isopropylmalate and 3-isopropylmalate, via the formation of 2-isopropylmaleate. This chain is 3-isopropylmalate dehydratase large subunit, found in Psychrobacter arcticus (strain DSM 17307 / VKM B-2377 / 273-4).